Reading from the N-terminus, the 691-residue chain is Elongation factor G (691 aa).

The tr-type G domain maps to 8–283; the sequence is EDYRNFGIMA…AVVDYLPSPV (276 aa). Residues 17-24, 81-85, and 135-138 contribute to the GTP site; these read AHIDAGKT, DTPGH, and NKMD.

This sequence belongs to the TRAFAC class translation factor GTPase superfamily. Classic translation factor GTPase family. EF-G/EF-2 subfamily.

The protein localises to the cytoplasm. Its function is as follows. Catalyzes the GTP-dependent ribosomal translocation step during translation elongation. During this step, the ribosome changes from the pre-translocational (PRE) to the post-translocational (POST) state as the newly formed A-site-bound peptidyl-tRNA and P-site-bound deacylated tRNA move to the P and E sites, respectively. Catalyzes the coordinated movement of the two tRNA molecules, the mRNA and conformational changes in the ribosome. The protein is Elongation factor G of Methylorubrum populi (strain ATCC BAA-705 / NCIMB 13946 / BJ001) (Methylobacterium populi).